Here is a 989-residue protein sequence, read N- to C-terminus: Zinc finger SWIM domain-containing protein 4 (989 aa).

The segment at 1–32 (MEPPAAKRSRGCPAGPEERDAGAGAARGRGRP) is disordered. The SWIM-type zinc-finger motif lies at 139 to 176 (YHVSISFDRCKITSVSCGCDNRDLFYCAHVVALSLYRI).

The protein is Zinc finger SWIM domain-containing protein 4 (ZSWIM4) of Homo sapiens (Human).